A 147-amino-acid polypeptide reads, in one-letter code: MVRSLLPLSWRRCASDSSNSSTNDDIIVDYDGPDLPLPEYPNRPNEPLGMRKQRLLYQSRKRGMLENDLLLSTFAHKYLKDFDEDETAIYDELINGVSNDWDIYYWATGVKPTPPQYETDIMELLKQHVKNTEKVARFRQPELTYYL.

It belongs to the SDHAF2 family. As to quaternary structure, interacts with the flavoprotein subunit within the SDH catalytic dimer.

Its subcellular location is the mitochondrion matrix. In terms of biological role, plays an essential role in the assembly of succinate dehydrogenase (SDH), an enzyme complex (also referred to as respiratory complex II) that is a component of both the tricarboxylic acid (TCA) cycle and the mitochondrial electron transport chain, and which couples the oxidation of succinate to fumarate with the reduction of ubiquinone (coenzyme Q) to ubiquinol. Required for flavinylation (covalent attachment of FAD) of the flavoprotein subunit of the SDH catalytic dimer. This chain is Succinate dehydrogenase assembly factor 2, mitochondrial, found in Drosophila grimshawi (Hawaiian fruit fly).